The sequence spans 807 residues: Spondin-1 (807 aa).

A signal peptide spans Met-1 to Ala-28. In terms of domain architecture, Reelin spans Phe-29–Lys-194. 17 disulfides stabilise this stretch: Cys-44–Cys-128, Cys-156–Cys-182, Cys-199–Cys-336, Cys-200–Cys-340, Cys-202–Cys-415, Cys-443–Cys-480, Cys-454–Cys-489, Cys-459–Cys-494, Cys-502–Cys-538, Cys-513–Cys-517, Cys-548–Cys-554, Cys-559–Cys-595, Cys-570–Cys-574, Cys-605–Cys-610, Cys-615–Cys-650, Cys-626–Cys-630, and Cys-660–Cys-665. The Spondin domain maps to Pro-195–Pro-388. N-linked (GlcNAc...) asparagine glycosylation is present at Asn-214. Ca(2+) contacts are provided by Asp-325, Asp-354, and Asp-358. 6 TSP type-1 domains span residues Thr-442–Ser-495, Thr-501–Ser-555, Ser-558–His-611, Pro-614–Pro-666, Asp-668–Leu-721, and Gly-754–Pro-806. A glycan (N-linked (GlcNAc...) asparagine) is linked at Asn-681.

As to quaternary structure, binds to the central extracellular domain of APP and inhibits beta-secretase cleavage of APP.

The protein resides in the secreted. Its subcellular location is the extracellular space. It localises to the extracellular matrix. In terms of biological role, cell adhesion protein that promotes the attachment of spinal cord and sensory neuron cells and the outgrowth of neurites in vitro. May contribute to the growth and guidance of axons in both the spinal cord and the PNS. Major factor for vascular smooth muscle cell. The sequence is that of Spondin-1 (SPON1) from Bos taurus (Bovine).